Here is a 393-residue protein sequence, read N- to C-terminus: Phosphoglycerate kinase (393 aa).

Residues 21 to 23 (DLN), Arg-37, 60 to 63 (HLGR), Arg-115, and Arg-148 each bind substrate. ATP contacts are provided by residues Lys-199, Glu-321, and 347-350 (GGDT).

It belongs to the phosphoglycerate kinase family. In terms of assembly, monomer.

It is found in the cytoplasm. It catalyses the reaction (2R)-3-phosphoglycerate + ATP = (2R)-3-phospho-glyceroyl phosphate + ADP. The protein operates within carbohydrate degradation; glycolysis; pyruvate from D-glyceraldehyde 3-phosphate: step 2/5. The polypeptide is Phosphoglycerate kinase (Dechloromonas aromatica (strain RCB)).